The chain runs to 122 residues: Large ribosomal subunit protein uL14 (122 aa).

It belongs to the universal ribosomal protein uL14 family. Part of the 50S ribosomal subunit. Forms a cluster with proteins L3 and L19. In the 70S ribosome, L14 and L19 interact and together make contacts with the 16S rRNA in bridges B5 and B8.

Its function is as follows. Binds to 23S rRNA. Forms part of two intersubunit bridges in the 70S ribosome. This is Large ribosomal subunit protein uL14 from Polaromonas naphthalenivorans (strain CJ2).